Reading from the N-terminus, the 138-residue chain is Large ribosomal subunit protein uL16 (138 aa).

The span at 1-15 (MLSPRKVKYRKKQRG) shows a compositional bias: basic residues. Residues 1–21 (MLSPRKVKYRKKQRGRLSGEA) are disordered.

Belongs to the universal ribosomal protein uL16 family. In terms of assembly, part of the 50S ribosomal subunit.

Its function is as follows. Binds 23S rRNA and is also seen to make contacts with the A and possibly P site tRNAs. This chain is Large ribosomal subunit protein uL16, found in Borrelia duttonii (strain Ly).